The chain runs to 406 residues: 2-epi-valiolone synthase (406 aa).

Residues methionine 1–serine 21 are disordered. Residues glutamate 105 to lysine 108, glycine 137 to aspartate 141, threonine 161 to serine 162, lysine 174, lysine 183, and cysteine 201 to threonine 204 contribute to the NAD(+) site. Glutamate 216, histidine 287, and histidine 304 together coordinate Zn(2+).

This sequence belongs to the sugar phosphate cyclases superfamily. EVS family. It depends on NAD(+) as a cofactor. Co(2+) serves as cofactor. Requires Zn(2+) as cofactor.

The catalysed reaction is D-sedoheptulose 7-phosphate = 2-epi-valiolone + phosphate. Functionally, catalyzes the conversion of sedoheptulose 7-phosphate to 2-epi-valiolone, which may serve as an alternative precursor for aminocyclitol biosynthesis. This is 2-epi-valiolone synthase from Stigmatella aurantiaca (strain DW4/3-1).